Here is a 259-residue protein sequence, read N- to C-terminus: Flagellar brake protein YcgR (259 aa).

A PilZ domain is found at Gln129 to Lys246.

Belongs to the YcgR family. As to quaternary structure, monomer. Interacts with the flagellar basal bodies.

It is found in the bacterial flagellum basal body. Its function is as follows. Acts as a flagellar brake, regulating swimming and swarming in a bis-(3'-5') cyclic diguanylic acid (c-di-GMP)-dependent manner. Binds 1 c-di-GMP dimer per subunit. Increasing levels of c-di-GMP lead to decreased motility. This chain is Flagellar brake protein YcgR, found in Azoarcus sp. (strain BH72).